The chain runs to 484 residues: UDP-N-acetylmuramate--L-alanine ligase (484 aa).

128–134 (GTHGKTT) contributes to the ATP binding site.

The protein belongs to the MurCDEF family.

It is found in the cytoplasm. It carries out the reaction UDP-N-acetyl-alpha-D-muramate + L-alanine + ATP = UDP-N-acetyl-alpha-D-muramoyl-L-alanine + ADP + phosphate + H(+). It functions in the pathway cell wall biogenesis; peptidoglycan biosynthesis. Functionally, cell wall formation. This Shewanella loihica (strain ATCC BAA-1088 / PV-4) protein is UDP-N-acetylmuramate--L-alanine ligase.